Reading from the N-terminus, the 648-residue chain is Bifunctional protein TilS/HprT (648 aa).

29-34 (SGGPDS) provides a ligand contact to ATP. D627 contacts Mg(2+).

This sequence in the N-terminal section; belongs to the tRNA(Ile)-lysidine synthase family. In the C-terminal section; belongs to the purine/pyrimidine phosphoribosyltransferase family. Mg(2+) is required as a cofactor.

It is found in the cytoplasm. The enzyme catalyses IMP + diphosphate = hypoxanthine + 5-phospho-alpha-D-ribose 1-diphosphate. The catalysed reaction is GMP + diphosphate = guanine + 5-phospho-alpha-D-ribose 1-diphosphate. It catalyses the reaction cytidine(34) in tRNA(Ile2) + L-lysine + ATP = lysidine(34) in tRNA(Ile2) + AMP + diphosphate + H(+). Its function is as follows. Ligates lysine onto the cytidine present at position 34 of the AUA codon-specific tRNA(Ile) that contains the anticodon CAU, in an ATP-dependent manner. Cytidine is converted to lysidine, thus changing the amino acid specificity of the tRNA from methionine to isoleucine. This chain is Bifunctional protein TilS/HprT (tilS/hprT), found in Listeria innocua serovar 6a (strain ATCC BAA-680 / CLIP 11262).